Here is a 1191-residue protein sequence, read N- to C-terminus: Protogenin (1191 aa).

The N-terminal stretch at Met1 to Ser23 is a signal peptide. 4 consecutive Ig-like domains span residues Val24–Thr124, Ser126–Thr216, Pro229–Thr316, and Pro321–Thr405. Residues Val24–Thr943 lie on the Extracellular side of the membrane. Disulfide bonds link Cys54/Cys107 and Cys150/Cys199. The N-linked (GlcNAc...) asparagine glycan is linked to Asn237. Cystine bridges form between Cys250–Cys298 and Cys342–Cys389. 5 consecutive Fibronectin type-III domains span residues Ala415–Asp509, Pro511–Ala607, Ala612–Arg711, Pro718–Glu811, and Pro816–Lys911. Asn624 carries N-linked (GlcNAc...) asparagine glycosylation. A helical membrane pass occupies residues Gly944–Ile964. Residues Tyr965 to Val1191 are Cytoplasmic-facing. 2 disordered regions span residues Ser975 to Glu1010 and Ile1079 to Val1191. Residues Thr977–Ala990 are compositionally biased toward polar residues. The segment covering Asp1104 to His1132 has biased composition (basic and acidic residues). Composition is skewed to polar residues over residues Ser1135–Pro1146 and Glu1171–Ala1180.

This sequence belongs to the immunoglobulin superfamily. DCC family. As to expression, from mid-gastrulation to early somite stages, restricted to posterior neural plate and mesoderm with an anterior limit at the level of the rhombencephalon. Posterior restriction is progressively lost during somitogenesis. Expression is maintained in the neural tube and paraxial mesoderm during this process. As development proceeds, further restricted to the dorsal parts of the spinal cord and somites. In parallel, expression progresses caudally during axis elongation.

Its subcellular location is the membrane. May play a role in anteroposterior axis elongation. This chain is Protogenin, found in Mus musculus (Mouse).